Consider the following 306-residue polypeptide: MKEDRVVFIFGPTAVGKSNILFHFPKNKAEIINVDSIQVYKEFNIASSKPSKNLMKHIKHHLVDFLDPEKDYTIGIFYEQALKIVKEIRQKKKIPIFVGGTAFYFKHLKDGFPSTPLVTSKIRIYVNNLLELKGKSYLLKELKNVDPIRFNMLNKNDIYRIKRSLEVYYQTGIPISQFQKKQSSEFKNIVIIGLKRSFEDLKTRISIRINEMLNSGLLSEIKGLFSKGYNENTPAFKGIGYNEFLLWKSRPCYGLNDIIGLINKNSFLYAKRQMTFFAKISDVLWLHPEDDLDNILNLIFKVDKEI.

11 to 18 lines the ATP pocket; that stretch reads GPTAVGKS. 13–18 contacts substrate; it reads TAVGKS. The segment at 35–38 is interaction with substrate tRNA; the sequence is DSIQ.

It belongs to the IPP transferase family. Monomer. Requires Mg(2+) as cofactor.

The enzyme catalyses adenosine(37) in tRNA + dimethylallyl diphosphate = N(6)-dimethylallyladenosine(37) in tRNA + diphosphate. Catalyzes the transfer of a dimethylallyl group onto the adenine at position 37 in tRNAs that read codons beginning with uridine, leading to the formation of N6-(dimethylallyl)adenosine (i(6)A). This chain is tRNA dimethylallyltransferase, found in Borreliella burgdorferi (strain ATCC 35210 / DSM 4680 / CIP 102532 / B31) (Borrelia burgdorferi).